Consider the following 150-residue polypeptide: Putative FAD-linked sulfhydryl oxidase 088R (150 aa).

The ERV/ALR sulfhydryl oxidase domain maps to 24–128 (GPFGPSGFGP…VTLQKAICIY (105 aa)). Residues Cys-74 and Cys-77 are joined by a disulfide bond.

FAD serves as cofactor.

The enzyme catalyses 2 R'C(R)SH + O2 = R'C(R)S-S(R)CR' + H2O2. FAD-dependent sulfhydryl oxidase that catalyzes disulfide bond formation. The sequence is that of Putative FAD-linked sulfhydryl oxidase 088R from Dryophytes versicolor (chameleon treefrog).